A 382-amino-acid polypeptide reads, in one-letter code: Ribosomal RNA large subunit methyltransferase G (382 aa).

Belongs to the methyltransferase superfamily. RlmG family.

Its subcellular location is the cytoplasm. It carries out the reaction guanosine(1835) in 23S rRNA + S-adenosyl-L-methionine = N(2)-methylguanosine(1835) in 23S rRNA + S-adenosyl-L-homocysteine + H(+). In terms of biological role, specifically methylates the guanine in position 1835 (m2G1835) of 23S rRNA. This is Ribosomal RNA large subunit methyltransferase G from Aliivibrio fischeri (strain MJ11) (Vibrio fischeri).